The sequence spans 1286 residues: ABC transporter B family member 4 (1286 aa).

A disordered region spans residues 1–39 (MASESGLNGDPNILEEVSETKRDKEEEEEVKKTEKKDEE). The span at 18-39 (SETKRDKEEEEEVKKTEKKDEE) shows a compositional bias: basic and acidic residues. Residues 60 to 80 (FLLMILGTLGSIGNGLGFPLM) traverse the membrane as a helical segment. The 287-residue stretch at 63–349 (MILGTLGSIG…TSPCLSAFAA (287 aa)) folds into the ABC transmembrane type-1 1 domain. 2 N-linked (GlcNAc...) asparagine glycosylation sites follow: asparagine 94 and asparagine 97. 5 consecutive transmembrane segments (helical) span residues 109–129 (FVWLGIGTFAAAFLQLSGWMI), 186–206 (IQLLATFVGGFVIAFVRGWLL), 208–228 (LVMLSSIPLLVMAGALLAIVI), 288–308 (GLGLGTLFLVVFCSYALAVWY), and 317–337 (GYTGGQVLNIIIAVLTGSMSL). Residues 384–620 (IELKDVYFTY…PEGAYSQLIR (237 aa)) enclose the ABC transporter 1 domain. ATP is bound at residue 419–426 (GQSGSGKS). Asparagine 500 and asparagine 571 each carry an N-linked (GlcNAc...) asparagine glycan. A compositionally biased stretch (basic and acidic residues) spans 625–636 (KKSDENAAEEQK). Residues 625–669 (KKSDENAAEEQKMSSIESFKQSSLRKSSLGRSLSKGGSSRGNSSR) form a disordered region. A compositionally biased stretch (low complexity) spans 646–669 (SSLRKSSLGRSLSKGGSSRGNSSR). The N-linked (GlcNAc...) asparagine glycan is linked to asparagine 666. Serine 671 is modified (phosphoserine). In terms of domain architecture, ABC transmembrane type-1 2 spans 720-1007 (LILGSISAAA…SSSLSPDSSK (288 aa)). 2 consecutive transmembrane segments (helical) span residues 721 to 741 (ILGSISAAANGVILPIFGILI) and 764 to 784 (IIFMVLGFASIIAYPAQTFFF). N-linked (GlcNAc...) asparagine glycosylation is found at asparagine 816 and asparagine 846. Helical transmembrane passes span 850 to 870 (ILAGLIIAFLACWQLAFVVLA), 871 to 891 (MLPLIALNGFLYMKFMKGFSA), 942 to 962 (GIVSGIGFGFSFFVLFSSYAA), and 976 to 996 (TTFDSVFRVFFALTMAAMAIS). Residues 1042 to 1279 (IELRHVSFKY…KDGVYASLVQ (238 aa)) enclose the ABC transporter 2 domain. 1077–1084 (GESGSGKS) is a binding site for ATP. N-linked (GlcNAc...) asparagine glycans are attached at residues asparagine 1131 and asparagine 1230.

This sequence belongs to the ABC transporter superfamily. ABCB family. Multidrug resistance exporter (TC 3.A.1.201) subfamily. As to quaternary structure, interacts with 1-naphthylphthalamic acid (NPA). Post-translationally, phosphorylation level varies significantly during early response to bacterial elicitor. Mostly expressed in roots, especially in the root elongation zone and lateral roots. In mature portion of the root, expressed in the epidermis and cortex. In the root elongation zone, confined to epidermis. In root tips, present in the root cap, S3 columella and epidermal cells.

It localises to the cell membrane. Auxin influx transporter that mediates the transport of auxin in roots. Contributes to the basipetal transport in hypocotyls and root tips by establishing an auxin uptake sink in the root cap. Confers sensitivity to 1-N-naphthylphthalamic acid (NPA). Regulates the root elongation, the initiation of lateral roots and the development of root hairs. Can transport IAA, indole-3-propionic acid, NPA syringic acid, vanillic acid and some auxin metabolites, but not 2,4-D and 1-naphthaleneacetic acid. In Arabidopsis thaliana (Mouse-ear cress), this protein is ABC transporter B family member 4 (ABCB4).